A 502-amino-acid chain; its full sequence is Alpha-ketoglutarate-dependent dioxygenase FTO (502 aa).

The tract at residues 32 to 324 (TPKDDEFYQQ…SSTHRVAECS (293 aa)) is fe2OG dioxygenase domain. Substrate is bound by residues R96 and Y108. N202 lines the 2-oxoglutarate pocket. The segment at 210 to 221 (PYLKEEPYFGMG) is loop L1; predicted to block binding of double-stranded DNA or RNA. K213 carries the post-translational modification N6-acetyllysine. Residues H228 and D230 each coordinate Fe cation. Position 228 to 231 (228 to 231 (HHDE)) interacts with substrate. Y292 contacts 2-oxoglutarate. Fe cation is bound at residue H304. 2-oxoglutarate is bound by residues 313–315 (RFS), T317, and R319.

It belongs to the fto family. Monomer. May also exist as homodimer. Fe(2+) serves as cofactor. Ubiquitous. Highly expressed in teeth and weakly in bone.

It is found in the nucleus. The protein localises to the nucleus speckle. It localises to the cytoplasm. It carries out the reaction a 5'-end (N(7)-methyl 5'-triphosphoguanosine)-(N(6),2'-O-dimethyladenosine) in mRNA + 2-oxoglutarate + O2 = a 5'-end (N(7)-methyl 5'-triphosphoguanosine)-(2'-O-methyladenosine) in mRNA + formaldehyde + succinate + CO2. The catalysed reaction is an N(6)-methyladenosine in mRNA + 2-oxoglutarate + O2 = an adenosine in mRNA + formaldehyde + succinate + CO2. The enzyme catalyses N(6)-methyladenosine in U6 snRNA + 2-oxoglutarate + O2 = adenosine in U6 snRNA + formaldehyde + succinate + CO2. It catalyses the reaction a 5'-end (N(7)-methyl 5'-triphosphoguanosine)-(N(6),2'-O-dimethyladenosine) in U6 snRNA + 2-oxoglutarate + O2 = a 5'-end (N(7)-methyl 5'-triphosphoguanosine)-(2'-O-methyladenosine) in U6 snRNA + formaldehyde + succinate + CO2. It carries out the reaction an N(1)-methyladenosine in tRNA + 2-oxoglutarate + O2 = an adenosine in tRNA + formaldehyde + succinate + CO2. Activated by ascorbate. Inhibited by N-oxalylglycine, fumarate and succinate. Its function is as follows. RNA demethylase that mediates oxidative demethylation of different RNA species, such as mRNAs, tRNAs and snRNAs, and acts as a regulator of fat mass, adipogenesis and energy homeostasis. Specifically demethylates N(6)-methyladenosine (m6A) RNA, the most prevalent internal modification of messenger RNA (mRNA) in higher eukaryotes. M6A demethylation by FTO affects mRNA expression and stability. Also able to demethylate m6A in U6 small nuclear RNA (snRNA). Mediates demethylation of N(6),2'-O-dimethyladenosine cap (m6A(m)), by demethylating the N(6)-methyladenosine at the second transcribed position of mRNAs and U6 snRNA. Demethylation of m6A(m) in the 5'-cap by FTO affects mRNA stability by promoting susceptibility to decapping. Also acts as a tRNA demethylase by removing N(1)-methyladenine from various tRNAs. Has no activity towards 1-methylguanine. Has no detectable activity towards double-stranded DNA. Also able to repair alkylated DNA and RNA by oxidative demethylation: demethylates single-stranded RNA containing 3-methyluracil, single-stranded DNA containing 3-methylthymine and has low demethylase activity towards single-stranded DNA containing 1-methyladenine or 3-methylcytosine. Ability to repair alkylated DNA and RNA is however unsure in vivo. Involved in the regulation of fat mass, adipogenesis and body weight, thereby contributing to the regulation of body size and body fat accumulation. Involved in the regulation of thermogenesis and the control of adipocyte differentiation into brown or white fat cells. Regulates activity of the dopaminergic midbrain circuitry via its ability to demethylate m6A in mRNAs. This is Alpha-ketoglutarate-dependent dioxygenase FTO from Rattus norvegicus (Rat).